Reading from the N-terminus, the 271-residue chain is DNA repair protein RecO (271 aa).

A compositionally biased stretch (basic and acidic residues) spans 249–264 (VRVEDSVRQDGDRDST). Residues 249–271 (VRVEDSVRQDGDRDSTTRTSSPA) form a disordered region.

Belongs to the RecO family.

In terms of biological role, involved in DNA repair and RecF pathway recombination. The protein is DNA repair protein RecO of Rhodococcus jostii (strain RHA1).